The sequence spans 173 residues: Probable capsid assembly scaffolding protein (173 aa).

Over residues 1-13 (MSDNPTPESTPEA) the composition is skewed to low complexity. Residues 1–27 (MSDNPTPESTPEAETPEVEKPMEPQGK) are disordered. Positions 36 to 84 (SLRQEAAAARVAKKDAVEAAEARVKAEYEAKLAERDTAYTELQNQLGQA) form a coiled coil. Residues 134–158 (GNKTPSPAFDPSQGRGGKPPIPLNG) are disordered.

This sequence belongs to the L5likevirus scaffolding protein family.

In terms of biological role, scaffolding protein involved in the icosahedric procapsid assembly. Coassembles with the capsid proteins to form the procapsid, in which the scaffolding protein is found within the external shell of icosahedrally arranged capsid protein subunits. The polypeptide is Probable capsid assembly scaffolding protein (16) (Mycobacterium (Mycobacteriophage L5)).